The following is a 173-amino-acid chain: Adenine phosphoribosyltransferase (173 aa).

The protein belongs to the purine/pyrimidine phosphoribosyltransferase family. As to quaternary structure, homodimer.

The protein localises to the cytoplasm. It carries out the reaction AMP + diphosphate = 5-phospho-alpha-D-ribose 1-diphosphate + adenine. It functions in the pathway purine metabolism; AMP biosynthesis via salvage pathway; AMP from adenine: step 1/1. Its function is as follows. Catalyzes a salvage reaction resulting in the formation of AMP, that is energically less costly than de novo synthesis. This chain is Adenine phosphoribosyltransferase, found in Desulfitobacterium hafniense (strain Y51).